The following is a 403-amino-acid chain: Na(+)-translocating NADH-quinone reductase subunit B (403 aa).

The next 4 helical transmembrane spans lie at 56-76, 121-141, 164-184, and 195-212; these read MMIL…WNTG, AYFL…EVLF, LPPS…VVIG, and FLNP…AYPA. Residue Thr230 is modified to FMN phosphoryl threonine. 6 consecutive transmembrane segments (helical) span residues 237–257, 265–285, 287–307, 312–332, 348–368, and 371–391; these read AGGV…FLGI, TSTL…IAAW, IVAG…LIGS, MFAM…GTLF, WAFG…NPAF, and GMML…HFVV.

The protein belongs to the NqrB/RnfD family. In terms of assembly, composed of six subunits; NqrA, NqrB, NqrC, NqrD, NqrE and NqrF. FMN serves as cofactor.

Its subcellular location is the cell inner membrane. The enzyme catalyses a ubiquinone + n Na(+)(in) + NADH + H(+) = a ubiquinol + n Na(+)(out) + NAD(+). Its function is as follows. NQR complex catalyzes the reduction of ubiquinone-1 to ubiquinol by two successive reactions, coupled with the transport of Na(+) ions from the cytoplasm to the periplasm. NqrA to NqrE are probably involved in the second step, the conversion of ubisemiquinone to ubiquinol. The sequence is that of Na(+)-translocating NADH-quinone reductase subunit B from Azotobacter vinelandii (strain DJ / ATCC BAA-1303).